Here is a 342-residue protein sequence, read N- to C-terminus: Tetraacyldisaccharide 4'-kinase (342 aa).

Residue 68–75 (TVGGTGKT) coordinates ATP.

It belongs to the LpxK family.

It catalyses the reaction a lipid A disaccharide + ATP = a lipid IVA + ADP + H(+). It participates in glycolipid biosynthesis; lipid IV(A) biosynthesis; lipid IV(A) from (3R)-3-hydroxytetradecanoyl-[acyl-carrier-protein] and UDP-N-acetyl-alpha-D-glucosamine: step 6/6. Transfers the gamma-phosphate of ATP to the 4'-position of a tetraacyldisaccharide 1-phosphate intermediate (termed DS-1-P) to form tetraacyldisaccharide 1,4'-bis-phosphate (lipid IVA). This Burkholderia pseudomallei (strain K96243) protein is Tetraacyldisaccharide 4'-kinase.